The chain runs to 312 residues: Malate dehydrogenase (312 aa).

NAD(+) is bound by residues 7-13 (GAAGGIG) and Asp34. Residues Arg81 and Arg87 each coordinate substrate. NAD(+) is bound by residues Asn94 and 117–119 (ITN). Substrate contacts are provided by Asn119 and Arg153. His177 serves as the catalytic Proton acceptor. Position 227 (Met227) interacts with NAD(+).

The protein belongs to the LDH/MDH superfamily. MDH type 1 family. Homodimer.

It catalyses the reaction (S)-malate + NAD(+) = oxaloacetate + NADH + H(+). Its function is as follows. Catalyzes the reversible oxidation of malate to oxaloacetate. This chain is Malate dehydrogenase, found in Escherichia coli O17:K52:H18 (strain UMN026 / ExPEC).